The chain runs to 270 residues: Probable septum site-determining protein MinC (270 aa).

It belongs to the MinC family. As to quaternary structure, interacts with MinD and FtsZ.

In terms of biological role, cell division inhibitor that blocks the formation of polar Z ring septums. Rapidly oscillates between the poles of the cell to destabilize FtsZ filaments that have formed before they mature into polar Z rings. Prevents FtsZ polymerization. The chain is Probable septum site-determining protein MinC from Cupriavidus necator (strain ATCC 17699 / DSM 428 / KCTC 22496 / NCIMB 10442 / H16 / Stanier 337) (Ralstonia eutropha).